The sequence spans 68 residues: Large ribosomal subunit protein uL30 (68 aa).

Belongs to the universal ribosomal protein uL30 family. As to quaternary structure, part of the 50S ribosomal subunit.

The protein is Large ribosomal subunit protein uL30 of Pseudarthrobacter chlorophenolicus (strain ATCC 700700 / DSM 12829 / CIP 107037 / JCM 12360 / KCTC 9906 / NCIMB 13794 / A6) (Arthrobacter chlorophenolicus).